A 396-amino-acid chain; its full sequence is Elongation factor Tu (396 aa).

In terms of domain architecture, tr-type G spans 10–207 (KPHCNIGTIG…VDAYIPQPPR (198 aa)). The tract at residues 19–26 (GHVDHGKT) is G1. 19–26 (GHVDHGKT) provides a ligand contact to GTP. Threonine 26 is a Mg(2+) binding site. Positions 60-64 (GITIS) are G2. The segment at 81-84 (DCPG) is G3. GTP-binding positions include 81-85 (DCPGH) and 136-139 (NKVD). Residues 136-139 (NKVD) are G4. The tract at residues 174–176 (SAL) is G5.

Belongs to the TRAFAC class translation factor GTPase superfamily. Classic translation factor GTPase family. EF-Tu/EF-1A subfamily. Monomer.

The protein resides in the cytoplasm. The enzyme catalyses GTP + H2O = GDP + phosphate + H(+). GTP hydrolase that promotes the GTP-dependent binding of aminoacyl-tRNA to the A-site of ribosomes during protein biosynthesis. This is Elongation factor Tu from Novosphingobium aromaticivorans (strain ATCC 700278 / DSM 12444 / CCUG 56034 / CIP 105152 / NBRC 16084 / F199).